Reading from the N-terminus, the 414-residue chain is Probable tRNA pseudouridine synthase D (414 aa).

Catalysis depends on Asp90, which acts as the Nucleophile. The region spanning 162-382 is the TRUD domain; it reads GFPNFFGVQR…SSGDYRIISA (221 aa).

The protein belongs to the pseudouridine synthase TruD family.

The catalysed reaction is uridine(13) in tRNA = pseudouridine(13) in tRNA. In terms of biological role, could be responsible for synthesis of pseudouridine from uracil-13 in transfer RNAs. The polypeptide is Probable tRNA pseudouridine synthase D (Picrophilus torridus (strain ATCC 700027 / DSM 9790 / JCM 10055 / NBRC 100828 / KAW 2/3)).